We begin with the raw amino-acid sequence, 393 residues long: NAD(P)H-quinone oxidoreductase subunit H, chloroplastic (393 aa).

It belongs to the complex I 49 kDa subunit family. In terms of assembly, NDH is composed of at least 16 different subunits, 5 of which are encoded in the nucleus.

The protein localises to the plastid. It is found in the chloroplast thylakoid membrane. It catalyses the reaction a plastoquinone + NADH + (n+1) H(+)(in) = a plastoquinol + NAD(+) + n H(+)(out). The enzyme catalyses a plastoquinone + NADPH + (n+1) H(+)(in) = a plastoquinol + NADP(+) + n H(+)(out). NDH shuttles electrons from NAD(P)H:plastoquinone, via FMN and iron-sulfur (Fe-S) centers, to quinones in the photosynthetic chain and possibly in a chloroplast respiratory chain. The immediate electron acceptor for the enzyme in this species is believed to be plastoquinone. Couples the redox reaction to proton translocation, and thus conserves the redox energy in a proton gradient. The protein is NAD(P)H-quinone oxidoreductase subunit H, chloroplastic of Cucumis sativus (Cucumber).